Reading from the N-terminus, the 434-residue chain is Beta-enolase (434 aa).

Ala-2 is modified (N-acetylalanine). Thr-72 carries the post-translational modification Phosphothreonine. 2 positions are modified to phosphoserine: Ser-83 and Ser-157. Residues His-158 and Glu-167 each coordinate substrate. At Ser-176 the chain carries Phosphoserine. Thr-205 bears the Phosphothreonine mark. The active-site Proton donor is the Glu-210. Thr-229 is modified (phosphothreonine). The residue at position 236 (Tyr-236) is a Phosphotyrosine. Asp-245 is a binding site for Mg(2+). The residue at position 263 (Ser-263) is a Phosphoserine. Substrate-binding residues include Glu-293 and Asp-318. 2 residues coordinate Mg(2+): Glu-293 and Asp-318. The active-site Proton acceptor is the Lys-343. Substrate-binding positions include 370–373 and Lys-394; that span reads SHRS.

It belongs to the enolase family. Mammalian enolase is composed of 3 isozyme subunits, alpha, beta and gamma, which can form homodimers or heterodimers which are cell-type and development-specific. Interacts with PNKD. It depends on Mg(2+) as a cofactor.

The protein resides in the cytoplasm. The enzyme catalyses (2R)-2-phosphoglycerate = phosphoenolpyruvate + H2O. It participates in carbohydrate degradation; glycolysis; pyruvate from D-glyceraldehyde 3-phosphate: step 4/5. Functionally, glycolytic enzyme that catalyzes the conversion of 2-phosphoglycerate to phosphoenolpyruvate. Appears to have a function in striated muscle development and regeneration. The sequence is that of Beta-enolase (ENO3) from Bos taurus (Bovine).